A 103-amino-acid chain; its full sequence is Large ribosomal subunit protein uL24 (103 aa).

The protein belongs to the universal ribosomal protein uL24 family. As to quaternary structure, part of the 50S ribosomal subunit.

Its function is as follows. One of two assembly initiator proteins, it binds directly to the 5'-end of the 23S rRNA, where it nucleates assembly of the 50S subunit. One of the proteins that surrounds the polypeptide exit tunnel on the outside of the subunit. The sequence is that of Large ribosomal subunit protein uL24 from Lachnospira eligens (strain ATCC 27750 / DSM 3376 / VPI C15-48 / C15-B4) (Eubacterium eligens).